The sequence spans 318 residues: Ferrochelatase (318 aa).

His186 and Glu264 together coordinate Fe cation.

The protein belongs to the ferrochelatase family.

The protein resides in the cytoplasm. The enzyme catalyses heme b + 2 H(+) = protoporphyrin IX + Fe(2+). The protein operates within porphyrin-containing compound metabolism; protoheme biosynthesis; protoheme from protoporphyrin-IX: step 1/1. Functionally, catalyzes the ferrous insertion into protoporphyrin IX. The chain is Ferrochelatase from Chlamydia felis (strain Fe/C-56) (Chlamydophila felis).